We begin with the raw amino-acid sequence, 426 residues long: Gamma-glutamyl phosphate reductase (426 aa).

This sequence belongs to the gamma-glutamyl phosphate reductase family.

The protein resides in the cytoplasm. The enzyme catalyses L-glutamate 5-semialdehyde + phosphate + NADP(+) = L-glutamyl 5-phosphate + NADPH + H(+). It functions in the pathway amino-acid biosynthesis; L-proline biosynthesis; L-glutamate 5-semialdehyde from L-glutamate: step 2/2. Catalyzes the NADPH-dependent reduction of L-glutamate 5-phosphate into L-glutamate 5-semialdehyde and phosphate. The product spontaneously undergoes cyclization to form 1-pyrroline-5-carboxylate. In Cupriavidus metallidurans (strain ATCC 43123 / DSM 2839 / NBRC 102507 / CH34) (Ralstonia metallidurans), this protein is Gamma-glutamyl phosphate reductase.